The chain runs to 273 residues: Cell division protein FtsQ (273 aa).

Residues 1 to 10 (MWNDARTINL) are Cytoplasmic-facing. The chain crosses the membrane as a helical span at residues 11-31 (IANTLAVLAVAAMLLAGVAWV). Topologically, residues 32-273 (AQRPYFTLAA…HSKSKPAKKR (242 aa)) are periplasmic. Residues 37 to 110 (FTLAAIEIES…NTLRVRVEEQ (74 aa)) form the POTRA domain.

This sequence belongs to the FtsQ/DivIB family. FtsQ subfamily. Part of a complex composed of FtsB, FtsL and FtsQ.

The protein localises to the cell inner membrane. In terms of biological role, essential cell division protein. May link together the upstream cell division proteins, which are predominantly cytoplasmic, with the downstream cell division proteins, which are predominantly periplasmic. May control correct divisome assembly. This Bordetella pertussis (strain Tohama I / ATCC BAA-589 / NCTC 13251) protein is Cell division protein FtsQ.